The sequence spans 296 residues: Cobalamin trafficking protein CblD (296 aa).

A mitochondrion-targeting transit peptide spans 1–38; that stretch reads MANVLCNRARLVSYLPGFCSLVKRVVNPKAFSTAGSSG. Lys-203 is subject to N6-acetyllysine.

In terms of assembly, heterodimer with MMACHC. Forms a multiprotein complex with MMACHC, MTR and MTRR. In terms of tissue distribution, widely expressed at high levels.

Its subcellular location is the cytoplasm. It is found in the mitochondrion. In terms of biological role, involved in cobalamin metabolism and trafficking. Plays a role in regulating the biosynthesis and the proportion of two coenzymes, methylcob(III)alamin (MeCbl) and 5'-deoxyadenosylcobalamin (AdoCbl). Promotes oxidation of cob(II)alamin bound to MMACHC. The processing of cobalamin in the cytosol occurs in a multiprotein complex composed of at least MMACHC, MMADHC, MTRR (methionine synthase reductase) and MTR (methionine synthase) which may contribute to shuttle safely and efficiently cobalamin towards MTR in order to produce methionine. The sequence is that of Cobalamin trafficking protein CblD from Homo sapiens (Human).